The primary structure comprises 457 residues: COBRA-like protein 3 (457 aa).

The signal sequence occupies residues 1 to 35 (MAVGGAGSSRSVAPCCCCAVLLAAALLFSAPATTE). Residues Asn-45, Asn-170, Asn-178, Asn-217, Asn-242, Asn-258, Asn-326, Asn-341, and Asn-361 are each glycosylated (N-linked (GlcNAc...) asparagine). Asn-430 is lipidated: GPI-anchor amidated asparagine. Positions 431 to 457 (ASPLTKQPLTLSVLVFSIVLATLLAYA) are cleaved as a propeptide — removed in mature form. Residues 437–457 (QPLTLSVLVFSIVLATLLAYA) traverse the membrane as a helical segment.

This sequence belongs to the COBRA family.

The protein resides in the cell membrane. In terms of biological role, involved in determining the orientation of cell expansion, probably by playing an important role in cellulose deposition. May act by recruiting cellulose synthesizing complexes to discrete positions on the cell surface. This is COBRA-like protein 3 (BC1L4) from Oryza sativa subsp. japonica (Rice).